Here is a 59-residue protein sequence, read N- to C-terminus: uncharacterized protein (59 aa).

This is an uncharacterized protein from Acidianus hospitalis (AFV-1).